Here is an 89-residue protein sequence, read N- to C-terminus: Putative membrane protein insertion efficiency factor (89 aa).

This sequence belongs to the UPF0161 family.

The protein localises to the cell membrane. Could be involved in insertion of integral membrane proteins into the membrane. This chain is Putative membrane protein insertion efficiency factor, found in Exiguobacterium sp. (strain ATCC BAA-1283 / AT1b).